A 364-amino-acid polypeptide reads, in one-letter code: BOLA class I histocompatibility antigen, alpha chain BL3-7 (364 aa).

The N-terminal stretch at 1-27 (MRVMRVMRPRTLLLLLSGVLVLTETLA) is a signal peptide. Residues 28–117 (GSHSLRYFYT…LRGYYNQSET (90 aa)) are alpha-1. At 28 to 310 (GSHSLRYFYT…WEPPQTSFLI (283 aa)) the chain is on the extracellular side. A glycan (N-linked (GlcNAc...) asparagine) is linked at Asn113. Residues 118–209 (GSHNIQAMYG…ENGKDTLLRA (92 aa)) form an alpha-2 region. 2 cysteine pairs are disulfide-bonded: Cys128-Cys191 and Cys230-Cys286. Residues 210-301 (DPPKAHVTHH…GLQEPLTLRW (92 aa)) are alpha-3. In terms of domain architecture, Ig-like C1-type spans 212–298 (PKAHVTHHSI…QHEGLQEPLT (87 aa)). Residues 302 to 310 (EPPQTSFLI) are connecting peptide. A helical transmembrane segment spans residues 311–331 (MGIIVGLVLLVVALVAGAVIW). Over 332–364 (RKKRSGEKGRIYTQAASSDSAQGSDVSLTVPKV) the chain is Cytoplasmic. A phosphoserine mark is found at Ser355 and Ser358.

It belongs to the MHC class I family. As to quaternary structure, heterodimer of an alpha chain and a beta chain (beta-2-microglobulin).

It localises to the membrane. Functionally, involved in the presentation of foreign antigens to the immune system. This is BOLA class I histocompatibility antigen, alpha chain BL3-7 from Bos taurus (Bovine).